Here is a 486-residue protein sequence, read N- to C-terminus: Vacuolar-processing enzyme beta-isozyme (486 aa).

Residues 1 to 21 (MAKSCYFRPALLLLLVLLVHA) form the signal peptide. The active site involves His169. Cys211 functions as the Nucleophile in the catalytic mechanism. A disulfide bond links Cys244 and Cys258. The N-linked (GlcNAc...) asparagine glycan is linked to Asn309. Intrachain disulfides connect Cys420–Cys450 and Cys432–Cys467.

Belongs to the peptidase C13 family. Post-translationally, auto-catalytic activation. As to expression, seed specific. Also expressed in the flowers and buds.

It is found in the vacuole. Its subcellular location is the protein storage vacuole. It catalyses the reaction Hydrolysis of proteins and small molecule substrates at -Asn-|-Xaa- bonds.. Its function is as follows. Asparagine-specific endopeptidase involved in the processing of vacuolar seed protein precursors into the mature forms. Probably involved in post-translational proteolysis of seed storage proteins in the protein storage vacuole of developing seeds. The sequence is that of Vacuolar-processing enzyme beta-isozyme from Arabidopsis thaliana (Mouse-ear cress).